Consider the following 379-residue polypeptide: Transcription termination factor Rho (379 aa).

The region spanning 1 to 68 (MTDKYGFLRS…KRIFQINGRF (68 aa)) is the Rho RNA-BD domain. Residues 111-116 (GKGQRG), 123-128 (KTGKTT), and R154 contribute to the ATP site.

This sequence belongs to the Rho family. In terms of assembly, homohexamer. The homohexamer assembles into an open ring structure.

Functionally, facilitates transcription termination by a mechanism that involves Rho binding to the nascent RNA, activation of Rho's RNA-dependent ATPase activity, and release of the mRNA from the DNA template. This chain is Transcription termination factor Rho, found in Karelsulcia muelleri (strain SMDSEM) (Sulcia muelleri).